Consider the following 406-residue polypeptide: uncharacterized protein (406 aa).

A lipid anchor (N-myristoyl glycine; by host) is attached at Gly2. The tract at residues 291 to 406 (QLESTTEVKP…FQYNKPTYDI (116 aa)) is disordered. Over residues 296-310 (TEVKPESTTEVKPES) the composition is skewed to basic and acidic residues. A compositionally biased stretch (polar residues) spans 311–323 (TSEVQPESTTEFQ). 3 stretches are compositionally biased toward low complexity: residues 324–333 (PESTTVVEPE), 341–351 (ESTTEFQPEST), and 359–369 (TTEPQVESTTE). Polar residues predominate over residues 370–406 (FQPESSTEPQVESTVEVQAESMNESSYFQYNKPTYDI).

This is an uncharacterized protein from Acanthamoeba polyphaga (Amoeba).